Reading from the N-terminus, the 318-residue chain is MSKVRVCFLGTPEFAVTSLKALLSDEHFEVVGVVTQPDRPAGRKLQLTPSPVKALAQAHNLKVLAPESLKANPLMLQEIKTWGAEVAVVVAFGQILTQEFLDSFRFGCVNVHGSVLPRWRGAAPIQRAIEAGDVESGVTLQKMVKKLDAGDIIGIRRVKITPDMNALQLHDVLAQLGAELLQVELMDYVRGNLAPTPQDESKVTLAKKIEKMESQIDWSTSAKAIDGKIRGFVYGPGTYTFLQGKKLKLHRATVTRDGGSIGSAKPGTITAVHEDHISVATGDGVLQLFEVQPESRNRMAIADFLKGHALKVGDQLGV.

114 to 117 (SVLP) contributes to the (6S)-5,6,7,8-tetrahydrofolate binding site.

The protein belongs to the Fmt family.

The enzyme catalyses L-methionyl-tRNA(fMet) + (6R)-10-formyltetrahydrofolate = N-formyl-L-methionyl-tRNA(fMet) + (6S)-5,6,7,8-tetrahydrofolate + H(+). In terms of biological role, attaches a formyl group to the free amino group of methionyl-tRNA(fMet). The formyl group appears to play a dual role in the initiator identity of N-formylmethionyl-tRNA by promoting its recognition by IF2 and preventing the misappropriation of this tRNA by the elongation apparatus. This is Methionyl-tRNA formyltransferase from Bdellovibrio bacteriovorus (strain ATCC 15356 / DSM 50701 / NCIMB 9529 / HD100).